The following is a 153-amino-acid chain: uncharacterized protein (153 aa).

Belongs to the RusA family.

This is an uncharacterized protein from Xylella fastidiosa (strain Temecula1 / ATCC 700964).